Reading from the N-terminus, the 272-residue chain is Indole-3-glycerol phosphate synthase (272 aa).

Belongs to the TrpC family.

The enzyme catalyses 1-(2-carboxyphenylamino)-1-deoxy-D-ribulose 5-phosphate + H(+) = (1S,2R)-1-C-(indol-3-yl)glycerol 3-phosphate + CO2 + H2O. It functions in the pathway amino-acid biosynthesis; L-tryptophan biosynthesis; L-tryptophan from chorismate: step 4/5. The protein is Indole-3-glycerol phosphate synthase of Mycobacterium leprae (strain Br4923).